The following is a 449-amino-acid chain: tRNA(Ile)-lysidine synthase (449 aa).

Position 35–40 (35–40) interacts with ATP; it reads SGGIDS.

Belongs to the tRNA(Ile)-lysidine synthase family.

It localises to the cytoplasm. The catalysed reaction is cytidine(34) in tRNA(Ile2) + L-lysine + ATP = lysidine(34) in tRNA(Ile2) + AMP + diphosphate + H(+). Its function is as follows. Ligates lysine onto the cytidine present at position 34 of the AUA codon-specific tRNA(Ile) that contains the anticodon CAU, in an ATP-dependent manner. Cytidine is converted to lysidine, thus changing the amino acid specificity of the tRNA from methionine to isoleucine. The chain is tRNA(Ile)-lysidine synthase from Coxiella burnetii (strain RSA 493 / Nine Mile phase I).